Consider the following 178-residue polypeptide: Ribosome maturation factor RimM (178 aa).

Residues Ala101 to Phe178 enclose the PRC barrel domain.

It belongs to the RimM family. In terms of assembly, binds ribosomal protein uS19.

It is found in the cytoplasm. Functionally, an accessory protein needed during the final step in the assembly of 30S ribosomal subunit, possibly for assembly of the head region. Essential for efficient processing of 16S rRNA. May be needed both before and after RbfA during the maturation of 16S rRNA. It has affinity for free ribosomal 30S subunits but not for 70S ribosomes. This chain is Ribosome maturation factor RimM, found in Pseudomonas putida (strain GB-1).